We begin with the raw amino-acid sequence, 246 residues long: E3 ubiquitin-protein ligase LubX (246 aa).

U-box domains are found at residues 36 to 109 and 131 to 204; these read TTPT…QTNY and EIPD…RKRE.

As to quaternary structure, interacts with host CLK1. Ubiquitinated in the presence of host E1 ubiquitin-activating enzyme, E2 ubiquitin-conjugating enzyme (UBE2D1 or UBE2D3) and ubiquitin.

It localises to the secreted. The protein localises to the host cell. The enzyme catalyses S-ubiquitinyl-[E2 ubiquitin-conjugating enzyme]-L-cysteine + [acceptor protein]-L-lysine = [E2 ubiquitin-conjugating enzyme]-L-cysteine + N(6)-ubiquitinyl-[acceptor protein]-L-lysine.. Its function is as follows. Effector proteins function to alter host cell physiology and promote bacterial survival in host tissues. This protein is an E3 ubiquitin ligase that interferes with host's ubiquitination pathway. Acts in conjunction with host E2 ubiquitin-conjugating enzymes UBE2D1 (UBCH5A) or UBE2D3 (UBCH5C), and mediates polyubiquitination of host kinase CLK1. The sequence is that of E3 ubiquitin-protein ligase LubX (lubX) from Legionella pneumophila subsp. pneumophila (strain Philadelphia 1 / ATCC 33152 / DSM 7513).